The sequence spans 291 residues: uncharacterized protein (291 aa).

Disordered stretches follow at residues 1–62 (MELR…SSKK), 220–242 (PLPA…TDKV), and 255–291 (ENNK…SRKK). Residues 18 to 41 (EPAKNKSERSIESNERVGTREAKS) show a composition bias toward basic and acidic residues. Composition is skewed to polar residues over residues 42-58 (ENTS…ATTD) and 226-236 (PSLNLSPQKVP). Ser267 is modified (phosphoserine).

The protein resides in the cytoplasm. It localises to the nucleus. This is an uncharacterized protein from Saccharomyces cerevisiae (strain ATCC 204508 / S288c) (Baker's yeast).